Here is a 580-residue protein sequence, read N- to C-terminus: RuBisCO large subunit-binding protein subunit alpha, chloroplastic (580 aa).

Over residues M1–P17 the composition is skewed to polar residues. The tract at residues M1–R24 is disordered.

This sequence belongs to the chaperonin (HSP60) family. Oligomer of probably six alpha and six beta subunits.

The protein resides in the plastid. It is found in the chloroplast. Its function is as follows. This protein binds RuBisCO small and large subunits and is implicated in the assembly of the enzyme oligomer. The protein is RuBisCO large subunit-binding protein subunit alpha, chloroplastic of Chlamydomonas reinhardtii (Chlamydomonas smithii).